The following is a 467-amino-acid chain: Neurexin-1-beta (467 aa).

Positions 1 to 45 (MYQRMLRCGAELGSPGGGGGGAGGRLALLWIVPLTLSGLLGVAWG) are cleaved as a signal peptide. Topologically, residues 46-391 (ASSLGAHHIH…EVIRESSSTT (346 aa)) are extracellular. The 199-residue stretch at 86-284 (YIFSKGGGQI…DANIAIVGNV (199 aa)) folds into the Laminin G-like domain. Residues Asp136 and Val153 each contribute to the Ca(2+) site. Asn183 is a glycosylation site (N-linked (GlcNAc...) asparagine). The segment at 200-229 (GNNDNERLAIARQRIPYRLGRVVDEWLLDK) is essential for interaction with CBLN1; modulates interaction affinity with NLGN1, NLGN2 and NLGN3; prevents interaction with DAG1/alpha-dystroglycan; modulates interaction with alpha-latrotoxin. 2 residues coordinate Ca(2+): Ile235 and Asn237. Residues 318–380 (LATSTARRGN…AGGREPYPGS (63 aa)) form a disordered region. Polar residues predominate over residues 324 to 339 (RRGNSPTKEPVSQTTD). A glycan (O-linked (Xyl...) (heparan sulfate) serine) is linked at Ser345. Residues 392-412 (GMVVGIVAAAALCILILLYAM) traverse the membrane as a helical segment. Residues 413 to 467 (YKYRNRDEGSYHVDESRNYISNSAQSNGAVVKEKQPSSAKSANKNKKNKDKEYYV) are Cytoplasmic-facing. Residues 434 to 467 (NSAQSNGAVVKEKQPSSAKSANKNKKNKDKEYYV) are disordered. Phosphoserine occurs at positions 449, 450, and 453.

The protein belongs to the neurexin family. In terms of assembly, the cytoplasmic C-terminal region binds to CASK. Binds NLGN1, NLGN2 and NLGN3, DAG1 (alpha-dystroglycan) and alpha-latrotoxin. Binding to neuroligins is calcium-dependent, and the binding preference ranks as follow: NLGN1 &gt; NLGN4 &gt;&gt; NLGN3 &gt; NLGN2. Interacts with CBLN2 and more weakly with CBLN4. Interacts with CBLN1; interaction is CBLN1 hexamer form-dependent; CBLN1-binding is calcium-independent; isoform 1b does not interact with CBLN1. Interacts with CLSTN3. O-glycosylated; contains heparan sulfate. Heparan sulfate attachment is required for synapse development by mediating interactions with neuroligins.

It localises to the presynaptic cell membrane. In terms of biological role, neuronal cell surface protein involved in cell recognition and cell adhesion by forming intracellular junctions through binding to neuroligins. Plays a role in formation of synaptic junctions. Functions as part of a trans-synaptic complex by binding to cerebellins and postsynaptic GRID1. This interaction helps regulate the activity of NMDA and AMPA receptors at hippocampal synapses without affecting synapse formation. NRXN1B-CBLN2-GRID1 complex transduce presynaptic signals into postsynaptic NMDAR response. The protein is Neurexin-1-beta of Bos taurus (Bovine).